The chain runs to 215 residues: dITP/XTP pyrophosphatase (215 aa).

13-18 serves as a coordination point for substrate; it reads THNTGK. Residue Asp-74 is the Proton acceptor of the active site. Position 74 (Asp-74) interacts with Mg(2+). Substrate is bound by residues Ser-75, 163–166, Lys-186, and 199–200; these read FGFD and HR.

This sequence belongs to the HAM1 NTPase family. In terms of assembly, homodimer. Mg(2+) is required as a cofactor.

It carries out the reaction XTP + H2O = XMP + diphosphate + H(+). The catalysed reaction is dITP + H2O = dIMP + diphosphate + H(+). The enzyme catalyses ITP + H2O = IMP + diphosphate + H(+). Pyrophosphatase that catalyzes the hydrolysis of nucleoside triphosphates to their monophosphate derivatives, with a high preference for the non-canonical purine nucleotides XTP (xanthosine triphosphate), dITP (deoxyinosine triphosphate) and ITP. Seems to function as a house-cleaning enzyme that removes non-canonical purine nucleotides from the nucleotide pool, thus preventing their incorporation into DNA/RNA and avoiding chromosomal lesions. The polypeptide is dITP/XTP pyrophosphatase (Bartonella quintana (strain Toulouse) (Rochalimaea quintana)).